The following is a 185-amino-acid chain: Elongation factor P (185 aa).

It belongs to the elongation factor P family.

The protein resides in the cytoplasm. The protein operates within protein biosynthesis; polypeptide chain elongation. Functionally, involved in peptide bond synthesis. Stimulates efficient translation and peptide-bond synthesis on native or reconstituted 70S ribosomes in vitro. Probably functions indirectly by altering the affinity of the ribosome for aminoacyl-tRNA, thus increasing their reactivity as acceptors for peptidyl transferase. This is Elongation factor P (efp) from Thermotoga maritima (strain ATCC 43589 / DSM 3109 / JCM 10099 / NBRC 100826 / MSB8).